Consider the following 952-residue polypeptide: MTNPSEGTTPLAFRYTPELANKIEGEWQNYWTDNGTFNAPNPVGDLAPADGKALPEDKLFVQDMFPYPSGAGLHVGHPLGYIATDVFARYNRMLGKNVLHTLGYDAFGLPAEQYAIQTGTHPRTTTMANIENMKRQLGALGLGHDSRRAVATTDPEFYKWTQWIFLQIFNSWFDAEQQKARPISELIPLLESGELKTKDGADYNALGDVEKQKAVDDYRLVYRSNSTVNWCPGLGTVLANEEVTADGRSERGNFPVFRKNLSQWMMRITAYSDRLIDDLELLDWTEKVKSMQRNWIGRSRGAEVDFSAEGETVTVFTTRPDTLFGATYMVLAPEHELVDVLLEKAGSYEGVDARWTNGQASPAEAVAAYRASIAAKSDLERQENKEKTGVFLGVYATNPVNGDQITVFIADYVLTGYGTGAIMAVPAHDERDYEFATVLGLPIKEVVAGGNIEEAAFTESGEAVNSANDNGLDINGLAKDEAIAKTIEWLEEKELGRGTIQYKLRDWLFARQRYWGEPFPIVYDENGQAHALPDSMLPVELPEVEDYKPVSFDPEDADSEPSPPLAKAREWVEVELDLGDGKKKYTRDTNVMPQWAGSSWYQLRYVDPSNDEQFCNIENERYWTGPRPETHGPNDPGGVDLYVGGVEHAVLHLLYARFWHKVLFDLGHVSSKEPYRRLYNQGYIQAFAYTDSRGVYVPADDVEEKDGKFFYQGEEVNQEYGKMGKSLKNAVAPDDICNNFGADTLRVYEMAMGPLDTSRPWATKDVVGAQRFLQRLWRLVVDENTGEVLTRDEVLTDDDNKQLHRTIAGVRDDYTNLRVNTVVAKLIEYVNYLTKTYPDTIPAGAVLPLIVMVSPIAPHIAEELWKKLGHDDTVTYEPFPTFEEKWLTDDEIELPVQVNGKVRGRITVAADASQEQVIEAALADEKVQEQISGKNLIKQIVVPGRMVNLVVK.

Positions 66–77 match the 'HIGH' region motif; the sequence is PYPSGAGLHVGH. The short motif at 722-726 is the 'KMSKS' region element; the sequence is KMGKS. K725 is an ATP binding site.

The protein belongs to the class-I aminoacyl-tRNA synthetase family.

Its subcellular location is the cytoplasm. It carries out the reaction tRNA(Leu) + L-leucine + ATP = L-leucyl-tRNA(Leu) + AMP + diphosphate. The protein is Leucine--tRNA ligase of Corynebacterium glutamicum (strain ATCC 13032 / DSM 20300 / JCM 1318 / BCRC 11384 / CCUG 27702 / LMG 3730 / NBRC 12168 / NCIMB 10025 / NRRL B-2784 / 534).